Reading from the N-terminus, the 189-residue chain is Myb-like protein T (189 aa).

Positions 121–172 constitute a Myb-like domain; that stretch reads NWSPDEQKALMVEVSTLGNKSEINWFFISQQLFLKGISRNARECQRKHESIQ.

This Dictyostelium discoideum (Social amoeba) protein is Myb-like protein T (mybT).